Here is a 359-residue protein sequence, read N- to C-terminus: Type-1 angiotensin II receptor (359 aa).

Residues 1–25 (MILNSSTEDGIKRIQDDCPKAGRHN) are Extracellular-facing. N-linked (GlcNAc...) asparagine glycosylation is present at Asn-4. 2 residues coordinate angiotensin II: Gln-15 and Asp-17. Intrachain disulfides connect Cys-18–Cys-274 and Cys-101–Cys-180. Residues 26-55 (YIFIMIPTLYSIIFVVGLFGNSLVVIVIYF) traverse the membrane as a helical segment. Residues 56 to 61 (YMKLKT) lie on the Cytoplasmic side of the membrane. Residues 62 to 89 (VASVFLLNLALADLCFLLTLPLWAVYTA) form a helical membrane-spanning segment. The Extracellular portion of the chain corresponds to 90-98 (MEYRWPFGN). The helical transmembrane segment at 99–125 (YLCKIASGSVSFNLYASVFLLTCLSID) threads the bilayer. Residues 126–141 (RYLAIVHPMKSRLRRT) are Cytoplasmic-facing. Residues 142-165 (MLVAKVTCIIIWLLAGLASLPTII) form a helical membrane-spanning segment. The Extracellular segment spans residues 166-190 (HRNVFFIENTNITVCAFHYESQNST). Arg-167 serves as a coordination point for angiotensin II. Residue Asn-176 is glycosylated (N-linked (GlcNAc...) asparagine). Phe-182, His-183, and Tyr-184 together coordinate angiotensin II. An N-linked (GlcNAc...) asparagine glycan is attached at Asn-188. A helical membrane pass occupies residues 191-216 (LPVGLGLTKNILGFLFPFLIILTSYT). Lys-199 serves as a coordination point for angiotensin II. Residues 217-239 (LIWKTLKKAYEIQKNKPRKDDIF) are Cytoplasmic-facing. Residues 240–268 (KIILAIVLFFFFSWVPHQIFTFMDVLIQL) form a helical membrane-spanning segment. Residues 269–278 (GLIRDCKIED) lie on the Extracellular side of the membrane. A helical transmembrane segment spans residues 279 to 304 (IVDTAMPITICLAYFNNCLNPPFYGF). Topologically, residues 305-359 (LGKKFKKYFLQLLKYIPPKAKSHSNLSTKMSTLSYRPSENGNSSTKKPAPCTEVE) are cytoplasmic. Residues 335–350 (STLSYRPSENGNSSTK) show a composition bias toward polar residues. A disordered region spans residues 335 to 359 (STLSYRPSENGNSSTKKPAPCTEVE). Residue Cys-355 is the site of S-palmitoyl cysteine attachment.

It belongs to the G-protein coupled receptor 1 family. In terms of assembly, interacts with MAS1. Interacts with ARRB1. Interacts with FLNA (via filamin repeat 21); increases PKA-mediated phosphorylation of FLNA. In terms of processing, C-terminal Ser or Thr residues may be phosphorylated.

Its subcellular location is the cell membrane. Functionally, receptor for angiotensin II, a vasoconstricting peptide, which acts as a key regulator of blood pressure and sodium retention by the kidney. The activated receptor in turn couples to G-alpha proteins G(q) (GNAQ, GNA11, GNA14 or GNA15) and thus activates phospholipase C and increases the cytosolic Ca(2+) concentrations, which in turn triggers cellular responses such as stimulation of protein kinase C. This Ovis aries (Sheep) protein is Type-1 angiotensin II receptor (AGTR1).